A 1011-amino-acid polypeptide reads, in one-letter code: Ankyrin repeat domain-containing protein 18B (1011 aa).

ANK repeat units follow at residues 67-96 (KDRT…QINI), 100-129 (LNRT…NPNI), 133-162 (YGNT…NIEA), 166-195 (EGNT…NIHA), and 199-228 (FKRT…HISS). Disordered stretches follow at residues 264–330 (LRND…GKKK) and 533–554 (MHPN…SEER). Coiled-coil stretches lie at residues 277 to 319 (ENLK…ENKQ), 385 to 639 (NEEM…ELVD), 692 to 722 (ISLL…CLEM), and 752 to 908 (FKKL…EAFA). A compositionally biased stretch (basic residues) spans 280-293 (KKRKKRKKLKKRKE). Residues 294-319 (GAKAEHNLKVASEEKQERLERSENKQ) are compositionally biased toward basic and acidic residues.

In Homo sapiens (Human), this protein is Ankyrin repeat domain-containing protein 18B (ANKRD18B).